The following is a 212-amino-acid chain: Ropporin-1 (212 aa).

Residues 12 to 43 form the RIIa domain; the sequence is PELPELLKQFTKDAIRTQPPDLIQWAAEYFGA. Position 56 is a phosphoserine (S56). The segment at 209–212 is interaction with RHPN1; the sequence is VRLE.

Belongs to the ropporin family. As to quaternary structure, homodimer. Interacts with AKAP3. May interact with SPA17. Interacts with RHPN1. Interacts with FSCB; the interaction increases upon spermatozoa capacitation conditions. Interacts with CFAP61. Post-translationally, sumoylated, sumoylation decreases upon spermatozoa capacitation conditions. In terms of tissue distribution, testis-specific. Present in the most inner parts of seminiferous tubules (at protein level).

It localises to the cell projection. The protein localises to the cilium. It is found in the flagellum. In terms of biological role, important for male fertility. With ROPN1L, involved in fibrous sheath integrity and sperm motility, plays a role in PKA-dependent signaling processes required for spermatozoa capacitation. The polypeptide is Ropporin-1 (Ropn1) (Mus musculus (Mouse)).